A 431-amino-acid chain; its full sequence is Probable carboxylic ester hydrolase LipM (431 aa).

3 helical membrane passes run 7–27, 38–58, and 75–95; these read IHVI…AATI, FASL…LPTL, and PVRA…LNLS. Catalysis depends on residues serine 261, aspartate 357, and histidine 390.

Belongs to the 'GDXG' lipolytic enzyme family.

It is found in the membrane. This Mycobacterium tuberculosis (strain ATCC 25618 / H37Rv) protein is Probable carboxylic ester hydrolase LipM.